The chain runs to 170 residues: 4-hydroxyphenylacetate 3-monooxygenase reductase component (170 aa).

Belongs to the non-flavoprotein flavin reductase family. HpaC subfamily. As to quaternary structure, homodimer. 4-HPA 3-monooxygenase consists of a reductase component HpaC and an oxygenase component HpaB.

The catalysed reaction is a reduced flavin + NAD(+) = an oxidized flavin + NADH + 2 H(+). The protein operates within aromatic compound metabolism; 4-hydroxyphenylacetate degradation; pyruvate and succinate semialdehyde from 4-hydroxyphenylacetate: step 1/7. In terms of biological role, catalyzes the reduction of free flavins (FMN, FAD and riboflavin) by NADH. Subsequently, the reduced flavins diffuse to the large HpaB component or to other electron acceptors such as cytochrome c and Fe(3+) ion. The sequence is that of 4-hydroxyphenylacetate 3-monooxygenase reductase component (hpaC) from Escherichia coli.